We begin with the raw amino-acid sequence, 826 residues long: Lethal(3)malignant brain tumor-like protein 1 (826 aa).

A Phosphoserine modification is found at serine 136. Disordered stretches follow at residues 167–197 and 220–271; these read LEPPVDASSCKCQACGPQQSSGLDVGSSGDR and LLKP…RSQL. Over residues 242-256 the composition is skewed to basic and acidic residues; the sequence is EAVKQGEGKDAEREP. MBT repeat units lie at residues 280-380, 388-487, and 496-591; these read WSWE…LQLP, FSWS…LTPP, and FCWE…LEPP. Residues 453–460 form an interaction with monomethylated and dimethylated peptides region; that stretch reads FDDWGDTY. Residues 586-621 are disordered; that stretch reads HPLEPPLRPRESSSVSPGGCPPLSHRSPPHTKTSKY. Positions 612–621 are enriched in basic residues; sequence SPPHTKTSKY. A CCHHC-type zinc finger spans residues 619–662; the sequence is SKYNFHHRKCPTPGCDGSGHVTGKFTAHHCLSGCPLAEKNQSRL. Residues cysteine 628, cysteine 633, histidine 646, and cysteine 652 each contribute to the Zn(2+) site. The tract at residues 663-699 is disordered; that stretch reads KAELSDSETAARKKNPSNLSPRKKPRHQGRIGRPPKY. Over residues 683-699 the composition is skewed to basic residues; the sequence is PRKKPRHQGRIGRPPKY. Residues 757 to 821 enclose the SAM domain; that stretch reads WTIEEVFGFV…YNAILMFKNT (65 aa).

In terms of assembly, homodimer. Interacts with RB1/RB (when monomethylated at 'Lys-860'). Interacts with p53/TP53 (when monomethylated at 'Lys-382'). Interacts with CBX3, ETV6, KMT5A and VCP/p97. Post-translationally, ubiquitinated in a VCP/p97-dependent way following DNA damage, leading to its removal from DNA damage sites, promoting accessibility of H4K20me2 mark for DNA repair protein TP53BP1, which is then recruited to DNA damage sites. Highly expressed in brain, testis, eyes, and ES cells.

It localises to the nucleus. Polycomb group (PcG) protein that specifically recognizes and binds mono- and dimethyllysine residues on target proteins, thereby acting as a 'reader' of a network of post-translational modifications. PcG proteins maintain the transcriptionally repressive state of genes: acts as a chromatin compaction factor by recognizing and binding mono- and dimethylated histone H1b/H1-4 at 'Lys-26' (H1bK26me1 and H1bK26me2) and histone H4 at 'Lys-20' (H4K20me1 and H4K20me2), leading to condense chromatin and repress transcription. Recognizes and binds p53/TP53 monomethylated at 'Lys-382', leading to repress p53/TP53-target genes. Also recognizes and binds RB1/RB monomethylated at 'Lys-860'. Participates in the ETV6-mediated repression. Probably plays a role in cell proliferation. Overexpression induces multinucleated cells, suggesting that it is required to accomplish normal mitosis. This is Lethal(3)malignant brain tumor-like protein 1 (L3mbtl1) from Mus musculus (Mouse).